Consider the following 203-residue polypeptide: Imidazoleglycerol-phosphate dehydratase (203 aa).

It belongs to the imidazoleglycerol-phosphate dehydratase family.

It is found in the cytoplasm. The enzyme catalyses D-erythro-1-(imidazol-4-yl)glycerol 3-phosphate = 3-(imidazol-4-yl)-2-oxopropyl phosphate + H2O. It participates in amino-acid biosynthesis; L-histidine biosynthesis; L-histidine from 5-phospho-alpha-D-ribose 1-diphosphate: step 6/9. The sequence is that of Imidazoleglycerol-phosphate dehydratase from Salinispora tropica (strain ATCC BAA-916 / DSM 44818 / JCM 13857 / NBRC 105044 / CNB-440).